Consider the following 805-residue polypeptide: Translation initiation factor IF-2 (805 aa).

2 disordered regions span residues 68–89 (VVTE…EKKE) and 141–215 (KEKE…KEKK). A compositionally biased stretch (basic and acidic residues) spans 79–89 (VEEKKEEEKKE). Residues 306 to 474 (PRPPIVVVMG…MILLLADILE (169 aa)) enclose the tr-type G domain. The interval 315–322 (GHVDHGKT) is G1. 315-322 (GHVDHGKT) serves as a coordination point for GTP. The interval 340–344 (GITQH) is G2. The tract at residues 362–365 (DTPG) is G3. GTP contacts are provided by residues 362–366 (DTPGH) and 416–419 (NKID). The tract at residues 416–419 (NKID) is G4. Positions 452–454 (SAK) are G5.

Belongs to the TRAFAC class translation factor GTPase superfamily. Classic translation factor GTPase family. IF-2 subfamily.

It localises to the cytoplasm. Functionally, one of the essential components for the initiation of protein synthesis. Protects formylmethionyl-tRNA from spontaneous hydrolysis and promotes its binding to the 30S ribosomal subunits. Also involved in the hydrolysis of GTP during the formation of the 70S ribosomal complex. This Aquifex aeolicus (strain VF5) protein is Translation initiation factor IF-2 (infB).